Reading from the N-terminus, the 106-residue chain is Large ribosomal subunit protein uL24 (106 aa).

Belongs to the universal ribosomal protein uL24 family. In terms of assembly, part of the 50S ribosomal subunit.

One of two assembly initiator proteins, it binds directly to the 5'-end of the 23S rRNA, where it nucleates assembly of the 50S subunit. Functionally, one of the proteins that surrounds the polypeptide exit tunnel on the outside of the subunit. The polypeptide is Large ribosomal subunit protein uL24 (Porphyromonas gingivalis (strain ATCC 33277 / DSM 20709 / CIP 103683 / JCM 12257 / NCTC 11834 / 2561)).